The following is a 702-amino-acid chain: Sodium/hydrogen exchanger 6 (702 aa).

Helical transmembrane passes span 72-92 (SANLLIFILLLTLTILTIWLF), 104-124 (GLAMIYGLLVGLVLRYGIHVP), 177-197 (VTFDPEVFFNILLPPIIFYAG), 212-232 (ILAYAFLGTAISCFVIGSIMY), 253-273 (CLLFGAIVSATDPVTVLAIFH), 279-299 (VELYALLFGESVLNDAVAIVL), 325-345 (IGIFLGIFSGSFAMGAATGVV), 373-393 (TFLLAEAWGFTGVVAVLFCGI), 415-435 (FELLNFLAENFIFSYMGLTLF), 437-457 (FQNHVFNPTFVVGAFIAIFLG), 480-500 (NFQHMMMFAGLRGAMAFALAI), and 516-536 (LLIVFFTVWVFGGGTTAMLSC).

It belongs to the monovalent cation:proton antiporter 1 (CPA1) transporter (TC 2.A.36) family. Homodimer. Interacts with RACK1; regulates the distribution of SLC9A6 between endosomes and the plasma membrane. Post-translationally, ubiquitinated (in vitro). Glycosylated.

It localises to the endosome membrane. The protein localises to the recycling endosome membrane. The protein resides in the early endosome membrane. It is found in the late endosome membrane. Its subcellular location is the cell membrane. The catalysed reaction is Na(+)(in) + H(+)(out) = Na(+)(out) + H(+)(in). It carries out the reaction K(+)(in) + H(+)(out) = K(+)(out) + H(+)(in). In terms of biological role, endosomal Na(+), K(+)/H(+) antiporter. Mediates the electroneutral exchange of endosomal luminal H(+) for a cytosolic Na(+) or K(+). By facilitating proton efflux, SLC9A6 counteracts the acidity generated by vacuolar (V)-ATPase, thereby limiting luminal acidification. Responsible for alkalizing and maintaining the endosomal pH, and consequently in, e.g., endosome maturation and trafficking of recycling endosomal cargo. Plays a critical role during neurodevelopment by regulating synaptic development and plasticity. Implicated in the maintenance of cell polarity in a manner that is dependent on its ability to modulate intravesicular pH. Regulates intracelular pH in some specialized cells, osteoclasts and stereocilia where this transporter localizes to the plasma membrane. The sequence is that of Sodium/hydrogen exchanger 6 (Slc9a6) from Mus musculus (Mouse).